Consider the following 60-residue polypeptide: Large ribosomal subunit protein uL30 (60 aa).

This sequence belongs to the universal ribosomal protein uL30 family. As to quaternary structure, part of the 50S ribosomal subunit.

The sequence is that of Large ribosomal subunit protein uL30 from Streptomyces avermitilis (strain ATCC 31267 / DSM 46492 / JCM 5070 / NBRC 14893 / NCIMB 12804 / NRRL 8165 / MA-4680).